The following is a 353-amino-acid chain: Terpene synthase 3 (353 aa).

The Mg(2+) site is built by Asp-118, Asn-261, and Glu-269. A D(D/E)XX(D/E) motif motif is present at residues 118 to 122 (DDLLE). The NSE motif motif lies at 261–269 (NDTFLLKKE). Residues 342–349 (WCSKTTRY) carry the WxxxxxRY motif motif.

It belongs to the terpene synthase family. Requires Mg(2+) as cofactor.

Functionally, terpene synthase that may be involved in the production of volatile terpenoids. Does not show detectable terpene products with either farnesyl diphosphate (FPP) or geranyl diphosphate (GPP). P.polycephalum has a unique biology and these volatile terpenoids could function in internal communication of P.polycephalum, to mark the territory that have been explored, or they may be involved in chemotaxis. This chain is Terpene synthase 3, found in Physarum polycephalum (Slime mold).